The sequence spans 315 residues: MKFKHTSVLLHETIDNLKPKNGGLYVDATFGGGGHAKYLLSKIETGTLVGFDQDEYAIKSAELNFADLLQPDSEPRLKLVHDNFSNLEQDLVKLGYSDGIDGIYYDLGVSSPQFDQADRGFSYRYNARLDMRMDQSQDTDAYQLVNTLSQKELADILYQYGDEKFSRQIAHRIVERRKDKPIVTTFELVDIIKEAIPAYARRTGGHPAKKSFQALRVAVNHELDVLQASLEEAIRILRPGGRISVITFQSHEDKIVKKIFKKYSEVEVPRGMPFVPDDMKPTLRLENRKPITASTSELENNNRSHSAKLRVAEKL.

Residues 33–35 (GGH), Asp52, Phe84, Asp106, and Gln113 contribute to the S-adenosyl-L-methionine site. A disordered region spans residues 290 to 315 (PITASTSELENNNRSHSAKLRVAEKL). Polar residues predominate over residues 292 to 304 (TASTSELENNNRS).

The protein belongs to the methyltransferase superfamily. RsmH family.

The protein localises to the cytoplasm. It carries out the reaction cytidine(1402) in 16S rRNA + S-adenosyl-L-methionine = N(4)-methylcytidine(1402) in 16S rRNA + S-adenosyl-L-homocysteine + H(+). In terms of biological role, specifically methylates the N4 position of cytidine in position 1402 (C1402) of 16S rRNA. In Lactobacillus helveticus (strain DPC 4571), this protein is Ribosomal RNA small subunit methyltransferase H.